The sequence spans 423 residues: MTDPLSRAHAAALDAADPLRNLRDAFVFPQHGDDDQTYFVGNSLGLQPRAARAMVDEVLDQWGALAVEGHFTGPTQWLTYHQLVGDALARVVGAQPGEVVAMNTLSVNLHLMMASFYRPTAERGAILIEAGAFPSDRHAVESQLRLHGLDPATHLIEVEADEPNGTVSMSAIAEAIAQHGPHLALVLWPGIQYRTGQAFDLAEIVRLARAQGAAVGLDLAHAVGNLPLTLHDDGVDFAVWCHYKYLNAGPGAVGGCFVHARHATSDLPRMAGWWGHEQQTRFRMDPQFVPSPGAEGWQLSNPPVLALAPLRASLALFDQAGMAALRAKSEQLTGHLEQMIHARVPQVLQIVTPVEPARRGCQLSLRVAGGRARGRALFEHLHAAGVLGDWREPDVIRIAPVPLYNRFSDLHTFVEQVEAWAAA.

Residues Leu-105, Ser-106, 133 to 136 (FPSD), Asp-218, His-221, and Tyr-243 contribute to the pyridoxal 5'-phosphate site. Lys-244 is subject to N6-(pyridoxal phosphate)lysine. Positions 273 and 301 each coordinate pyridoxal 5'-phosphate.

Belongs to the kynureninase family. In terms of assembly, homodimer. It depends on pyridoxal 5'-phosphate as a cofactor.

The enzyme catalyses L-kynurenine + H2O = anthranilate + L-alanine + H(+). It carries out the reaction 3-hydroxy-L-kynurenine + H2O = 3-hydroxyanthranilate + L-alanine + H(+). It functions in the pathway amino-acid degradation; L-kynurenine degradation; L-alanine and anthranilate from L-kynurenine: step 1/1. The protein operates within cofactor biosynthesis; NAD(+) biosynthesis; quinolinate from L-kynurenine: step 2/3. Its function is as follows. Catalyzes the cleavage of L-kynurenine (L-Kyn) and L-3-hydroxykynurenine (L-3OHKyn) into anthranilic acid (AA) and 3-hydroxyanthranilic acid (3-OHAA), respectively. The chain is Kynureninase from Xanthomonas axonopodis pv. citri (strain 306).